Here is a 246-residue protein sequence, read N- to C-terminus: Serine protease 1 (246 aa).

Residues 1 to 15 (MSALLILALVGAAVA) form the signal peptide. The propeptide at 16-23 (FPLEDDDK) is activation peptide. Positions 24-244 (IVGGYTCPEH…FVGWIQDTIA (221 aa)) constitute a Peptidase S1 domain. Cystine bridges form between C30/C160, C48/C64, C132/C233, C139/C206, C171/C185, and C196/C220. Residue H63 is the Charge relay system of the active site. Ca(2+) contacts are provided by E75, N77, V80, and E85. The Charge relay system role is filled by D107. The Charge relay system role is filled by S200.

This sequence belongs to the peptidase S1 family. As to quaternary structure, interacts with SERPINA1. Ca(2+) is required as a cofactor.

It localises to the secreted. The protein localises to the extracellular space. The enzyme catalyses Preferential cleavage: Arg-|-Xaa, Lys-|-Xaa.. In Rattus norvegicus (Rat), this protein is Serine protease 1.